Here is a 378-residue protein sequence, read N- to C-terminus: UDP-N-acetylglucosamine--N-acetylmuramyl-(pentapeptide) pyrophosphoryl-undecaprenol N-acetylglucosamine transferase (378 aa).

UDP-N-acetyl-alpha-D-glucosamine contacts are provided by residues 14 to 16 (TGG), N125, R165, S193, and Q293.

This sequence belongs to the glycosyltransferase 28 family. MurG subfamily.

Its subcellular location is the cell inner membrane. It carries out the reaction di-trans,octa-cis-undecaprenyl diphospho-N-acetyl-alpha-D-muramoyl-L-alanyl-D-glutamyl-meso-2,6-diaminopimeloyl-D-alanyl-D-alanine + UDP-N-acetyl-alpha-D-glucosamine = di-trans,octa-cis-undecaprenyl diphospho-[N-acetyl-alpha-D-glucosaminyl-(1-&gt;4)]-N-acetyl-alpha-D-muramoyl-L-alanyl-D-glutamyl-meso-2,6-diaminopimeloyl-D-alanyl-D-alanine + UDP + H(+). It participates in cell wall biogenesis; peptidoglycan biosynthesis. Its function is as follows. Cell wall formation. Catalyzes the transfer of a GlcNAc subunit on undecaprenyl-pyrophosphoryl-MurNAc-pentapeptide (lipid intermediate I) to form undecaprenyl-pyrophosphoryl-MurNAc-(pentapeptide)GlcNAc (lipid intermediate II). The chain is UDP-N-acetylglucosamine--N-acetylmuramyl-(pentapeptide) pyrophosphoryl-undecaprenol N-acetylglucosamine transferase from Bartonella quintana (strain Toulouse) (Rochalimaea quintana).